Consider the following 260-residue polypeptide: Fructose import ATP-binding protein FrcA (260 aa).

An ABC transporter domain is found at 7-251 (LTARGLVKRY…DAVAFMTGAK (245 aa)). 39 to 46 (GDNGAGKS) lines the ATP pocket.

It belongs to the ABC transporter superfamily. As to quaternary structure, the complex is composed of two ATP-binding proteins (FrcA), two transmembrane proteins (FrcC) and a solute-binding protein (FrcB).

Its subcellular location is the cell inner membrane. The enzyme catalyses D-fructose(out) + ATP + H2O = D-fructose(in) + ADP + phosphate + H(+). In terms of biological role, part of the high-affinity ABC transporter complex FrcBCA involved in fructose uptake. Is also a high-affinity transporter for ribose and mannose. Responsible for energy coupling to the transport system. In Rhizobium meliloti (Ensifer meliloti), this protein is Fructose import ATP-binding protein FrcA.